A 72-amino-acid chain; its full sequence is uncharacterized protein (72 aa).

This is an uncharacterized protein from Escherichia coli O157:H7.